Reading from the N-terminus, the 296-residue chain is Ribosomal RNA small subunit methyltransferase A (296 aa).

A compositionally biased stretch (basic and acidic residues) spans 1–11 (MERSHVGRDCG). Positions 1 to 24 (MERSHVGRDCGSRSSPRAFSVPTS) are disordered. Positions 12-24 (SRSSPRAFSVPTS) are enriched in polar residues. Positions 43, 45, 70, 91, 113, and 135 each coordinate S-adenosyl-L-methionine.

The protein belongs to the class I-like SAM-binding methyltransferase superfamily. rRNA adenine N(6)-methyltransferase family. RsmA subfamily.

It localises to the cytoplasm. It catalyses the reaction adenosine(1518)/adenosine(1519) in 16S rRNA + 4 S-adenosyl-L-methionine = N(6)-dimethyladenosine(1518)/N(6)-dimethyladenosine(1519) in 16S rRNA + 4 S-adenosyl-L-homocysteine + 4 H(+). Its function is as follows. Specifically dimethylates two adjacent adenosines (A1518 and A1519) in the loop of a conserved hairpin near the 3'-end of 16S rRNA in the 30S particle. May play a critical role in biogenesis of 30S subunits. The sequence is that of Ribosomal RNA small subunit methyltransferase A from Salinibacter ruber (strain DSM 13855 / M31).